The chain runs to 425 residues: Glutamyl-tRNA reductase (425 aa).

Substrate-binding positions include T51–R54, S111, D116–Q118, and Q122. C52 acts as the Nucleophile in catalysis. G191–G196 serves as a coordination point for NADP(+).

Belongs to the glutamyl-tRNA reductase family. As to quaternary structure, homodimer.

It catalyses the reaction (S)-4-amino-5-oxopentanoate + tRNA(Glu) + NADP(+) = L-glutamyl-tRNA(Glu) + NADPH + H(+). The protein operates within porphyrin-containing compound metabolism; protoporphyrin-IX biosynthesis; 5-aminolevulinate from L-glutamyl-tRNA(Glu): step 1/2. Functionally, catalyzes the NADPH-dependent reduction of glutamyl-tRNA(Glu) to glutamate 1-semialdehyde (GSA). The polypeptide is Glutamyl-tRNA reductase (Cytophaga hutchinsonii (strain ATCC 33406 / DSM 1761 / CIP 103989 / NBRC 15051 / NCIMB 9469 / D465)).